Consider the following 407-residue polypeptide: uncharacterized protein (407 aa).

This is an uncharacterized protein from Saimiriine herpesvirus 2 (strain 11) (SaHV-2).